The chain runs to 129 residues: Ribosome-binding factor A (129 aa).

This sequence belongs to the RbfA family. In terms of assembly, monomer. Binds 30S ribosomal subunits, but not 50S ribosomal subunits or 70S ribosomes.

The protein resides in the cytoplasm. Functionally, one of several proteins that assist in the late maturation steps of the functional core of the 30S ribosomal subunit. Associates with free 30S ribosomal subunits (but not with 30S subunits that are part of 70S ribosomes or polysomes). Required for efficient processing of 16S rRNA. May interact with the 5'-terminal helix region of 16S rRNA. This chain is Ribosome-binding factor A, found in Marinomonas sp. (strain MWYL1).